We begin with the raw amino-acid sequence, 287 residues long: 4-hydroxybenzoate octaprenyltransferase (287 aa).

The next 8 membrane-spanning stretches (helical) occupy residues 21 to 39 (PIGTLLLLWPTLWALWLAA), 95 to 115 (VLALFAVLALISFALVLTMNP), 116 to 136 (LTIGLSFAALLLAVCYPFMKR), 138 to 158 (IPIPQLVLGMAFSWSIPMAYA), 161 to 181 (ANALPAVAWLVFLANLLWTIA), 213 to 233 (IIGALQLLTLLILLLVGQLSE), 234 to 251 (LGSSYYWSLLAAAALFVY), and 264 to 284 (CFQAFLNNNYVGALIFAGVVI).

This sequence belongs to the UbiA prenyltransferase family. It depends on Mg(2+) as a cofactor.

Its subcellular location is the cell inner membrane. It catalyses the reaction all-trans-octaprenyl diphosphate + 4-hydroxybenzoate = 4-hydroxy-3-(all-trans-octaprenyl)benzoate + diphosphate. Its pathway is cofactor biosynthesis; ubiquinone biosynthesis. Its function is as follows. Catalyzes the prenylation of para-hydroxybenzoate (PHB) with an all-trans polyprenyl group. Mediates the second step in the final reaction sequence of ubiquinone-8 (UQ-8) biosynthesis, which is the condensation of the polyisoprenoid side chain with PHB, generating the first membrane-bound Q intermediate 3-octaprenyl-4-hydroxybenzoate. The polypeptide is 4-hydroxybenzoate octaprenyltransferase (Aeromonas hydrophila subsp. hydrophila (strain ATCC 7966 / DSM 30187 / BCRC 13018 / CCUG 14551 / JCM 1027 / KCTC 2358 / NCIMB 9240 / NCTC 8049)).